We begin with the raw amino-acid sequence, 75 residues long: MKKDLHPEYKRTMASCACGNTLEVGSTRDEIKVEICSKCHPFFTGKQKLVDTAGRIDRFKKKYAGFDAAAAAKKK.

Zn(2+)-binding residues include Cys16, Cys18, Cys36, and Cys39.

It belongs to the bacterial ribosomal protein bL31 family. Type A subfamily. As to quaternary structure, part of the 50S ribosomal subunit. Zn(2+) serves as cofactor.

In terms of biological role, binds the 23S rRNA. The sequence is that of Large ribosomal subunit protein bL31 from Desulforapulum autotrophicum (strain ATCC 43914 / DSM 3382 / VKM B-1955 / HRM2) (Desulfobacterium autotrophicum).